A 1173-amino-acid polypeptide reads, in one-letter code: Thrombospondin-1 (1173 aa).

The N-terminal stretch at 1–18 (MKGIFLLLMLVMPQTHQA) is a signal peptide. Residues 22–224 (GNDDNSVFDL…LQNVRFVFGT (203 aa)) form the Laminin G-like domain. A heparin-binding region spans residues 50–98 (HLVKGPDPSSPAYRIEDADLIPPLPEDKFQDLLDAIRADRGFILLATLR). N-linked (GlcNAc...) asparagine glycosylation is found at N155 and N158. A disulfide bond links C174 and C235. Residues N250 and N363 are each glycosylated (N-linked (GlcNAc...) asparagine). One can recognise a VWFC domain in the interval 319 to 376 (GVCLHNGVLHKNRDEWTVDSCTECTCQNSATICRKVSCPLMPCTNATIPDGECCPRCW). 3 TSP type-1 domains span residues 382-432 (DDDW…QDCD), 438-493 (DGGW…DPCP), and 495-550 (NGQW…QDCP). 18 disulfides stabilise this stretch: C394/C426, C398/C431, C409/C416, C450/C487, C454/C492, C465/C477, C507/C544, C511/C549, C522/C534, C554/C565, C559/C575, C578/C589, C595/C611, C602/C620, C623/C647, C653/C666, C660/C679, and C681/C692. In terms of domain architecture, EGF-like 1 spans 550–590 (PIDGCLSNPCFAGVKCTSFIDGSWKCGSCPPGYRGNGITCK). The region spanning 649–693 (PRNPCADGTHDCHKNARCIYLGHYSDPMFRCECRPGYAGNGIICG) is the EGF-like 2 domain. 8 TSP type-3 repeats span residues 694–729 (EDTDLDGWPNENLTCVDNATYHCLKDNCPNLPNSGQ), 730–765 (EDYDKDGMGDACDKDDDNDGILDDRDNCQFVYNPAQ), 766–788 (YDYDRDDVGDRCDNCPYNHNPDQ), 789–824 (ADTDRNGEGDACSVDIDGDGILNERDNCAYVYNVDQ), 825–847 (KDTDKDGVGDQCDNCPLEHNPEQ), 848–885 (TDSDSDLIGDKCDNNQDIDEDGHQNNLDNCPYIPNANQ), 886–921 (ADHDKDGKGDACDHDDDNDGVPDDKDNCRLVPNPDQ), and 922–957 (TDTNGDGRGDACQYDFDDDSIPDAEDVCPENVEIST). N-linked (GlcNAc...) asparagine glycosylation is found at N705 and N711. Intrachain disulfides connect C708-C716, C721-C741, C757-C777, C780-C800, C816-C836, C839-C859, C877-C897, C913-C933, and C949-C1170. Positions 838–935 (NCPLEHNPEQ…GDGRGDACQY (98 aa)) are disordered. The span at 886–897 (ADHDKDGKGDAC) shows a compositional bias: basic and acidic residues. The short motif at 929–931 (RGD) is the Cell attachment site element. The TSP C-terminal domain occupies 961 to 1173 (RKFQMVPLDP…SDLKYECRDS (213 aa)). A glycan (N-linked (GlcNAc...) asparagine) is linked at N1070.

The protein belongs to the thrombospondin family. In terms of assembly, homotrimer; disulfide-linked.

It is found in the secreted. The protein resides in the cell surface. It localises to the extracellular space. The protein localises to the extracellular matrix. Its subcellular location is the endoplasmic reticulum. It is found in the sarcoplasmic reticulum. In terms of biological role, adhesive glycoprotein that mediates cell-to-cell and cell-to-matrix interactions. Can bind to fibrinogen, fibronectin, laminin, type V collagen and integrins alpha-V/beta-1, alpha-V/beta-3 and alpha-IIb/beta-3. May play a role in ER stress response. This chain is Thrombospondin-1 (thbs1), found in Xenopus laevis (African clawed frog).